The primary structure comprises 149 residues: 3-dehydroquinate dehydratase (149 aa).

Tyr26 acts as the Proton acceptor in catalysis. Substrate is bound by residues Asn77, His83, and Asp90. His103 (proton donor) is an active-site residue. Substrate contacts are provided by residues 104-105 (LS) and Arg114.

The protein belongs to the type-II 3-dehydroquinase family. Homododecamer.

The enzyme catalyses 3-dehydroquinate = 3-dehydroshikimate + H2O. The protein operates within metabolic intermediate biosynthesis; chorismate biosynthesis; chorismate from D-erythrose 4-phosphate and phosphoenolpyruvate: step 3/7. In terms of biological role, catalyzes a trans-dehydration via an enolate intermediate. The sequence is that of 3-dehydroquinate dehydratase from Vibrio vulnificus (strain YJ016).